Reading from the N-terminus, the 382-residue chain is Inactive anthranilate O-methyltransferase 1 (382 aa).

S-adenosyl-L-homocysteine-binding residues include tyrosine 20, cysteine 61, asparagine 66, aspartate 102, leucine 103, serine 146, and tyrosine 147. Positions 268 and 270 each coordinate Mg(2+).

The protein belongs to the methyltransferase superfamily. Type-7 methyltransferase family. SABATH subfamily.

The protein is Inactive anthranilate O-methyltransferase 1 (AAMT1I) of Zea mays (Maize).